A 128-amino-acid polypeptide reads, in one-letter code: Arginine decarboxylase proenzyme (128 aa).

Ser-76 functions as the Schiff-base intermediate with substrate; via pyruvic acid in the catalytic mechanism. Residue Ser-76 is modified to Pyruvic acid (Ser); by autocatalysis. His-81 (proton acceptor; for processing activity) is an active-site residue. The active-site Proton donor; for catalytic activity is the Cys-96.

Belongs to the prokaryotic AdoMetDC family. Type 1 subfamily. Heterooctamer of four alpha and four beta chains arranged as a tetramer of alpha/beta heterodimers. Requires pyruvate as cofactor. Post-translationally, is synthesized initially as an inactive proenzyme. Formation of the active enzyme involves a self-maturation process in which the active site pyruvoyl group is generated from an internal serine residue via an autocatalytic post-translational modification. Two non-identical subunits are generated from the proenzyme in this reaction, and the pyruvate is formed at the N-terminus of the alpha chain, which is derived from the carboxyl end of the proenzyme. The post-translation cleavage follows an unusual pathway, termed non-hydrolytic serinolysis, in which the side chain hydroxyl group of the serine supplies its oxygen atom to form the C-terminus of the beta chain, while the remainder of the serine residue undergoes an oxidative deamination to produce ammonia and the pyruvoyl group blocking the N-terminus of the alpha chain.

It catalyses the reaction L-arginine + H(+) = agmatine + CO2. It functions in the pathway amine and polyamine biosynthesis; agmatine biosynthesis; agmatine from L-arginine: step 1/1. Functionally, specifically catalyzes the decarboxylation of L-arginine to agmatine. Has no S-adenosylmethionine decarboxylase (AdoMetDC) activity. This Metallosphaera sedula (strain ATCC 51363 / DSM 5348 / JCM 9185 / NBRC 15509 / TH2) protein is Arginine decarboxylase proenzyme.